A 152-amino-acid polypeptide reads, in one-letter code: uncharacterized protein (152 aa).

At 1–5 (MWFPQ) the chain is on the cytoplasmic side. The helical transmembrane segment at 6-26 (IIAGMAAGGAASAMTPGKVLF) threads the bilayer. Residues 27–38 (TNALGLGCSRSR) are Extracellular-facing. The chain crosses the membrane as a helical span at residues 39–59 (GLFLEMFGTAVLCLTVLMTAV). At 60 to 65 (EKRETN) the chain is on the cytoplasmic side. Residues 66–86 (FMAALPIGISLFMAHMALTGY) form a helical membrane-spanning segment. Topologically, residues 87-110 (TGTGVNPARSLGAAVAARYFPHYH) are extracellular. The NPA signature appears at 92-94 (NPA). A helical transmembrane segment spans residues 111–131 (WIYWISPLLGAFLAWSVWQLL). At 132-152 (QILDYTTYVNAEKAAGQKKED) the chain is on the cytoplasmic side.

Belongs to the MIP/aquaporin (TC 1.A.8) family.

It is found in the membrane. This is an uncharacterized protein from Saccharomyces cerevisiae (strain RM11-1a) (Baker's yeast).